The primary structure comprises 207 residues: Ribonuclease HII (207 aa).

One can recognise an RNase H type-2 domain in the interval 12–201; it reads ALVAGVDEVG…VRELLDVVSI (190 aa). The a divalent metal cation site is built by Asp-18, Glu-19, and Asp-110.

The protein belongs to the RNase HII family. It depends on Mn(2+) as a cofactor. Mg(2+) is required as a cofactor.

It localises to the cytoplasm. It catalyses the reaction Endonucleolytic cleavage to 5'-phosphomonoester.. Functionally, endonuclease that specifically degrades the RNA of RNA-DNA hybrids. This is Ribonuclease HII from Azotobacter vinelandii (strain DJ / ATCC BAA-1303).